The sequence spans 284 residues: Pantothenate synthetase (284 aa).

30–37 (MGNLHDGH) contributes to the ATP binding site. The active-site Proton donor is the His37. Gln61 contributes to the (R)-pantoate binding site. Gln61 contributes to the beta-alanine binding site. 149–152 (GEKD) serves as a coordination point for ATP. Gln155 is a (R)-pantoate binding site. Residues Ile178 and 186-189 (LSSR) each bind ATP.

The protein belongs to the pantothenate synthetase family. As to quaternary structure, homodimer.

Its subcellular location is the cytoplasm. It catalyses the reaction (R)-pantoate + beta-alanine + ATP = (R)-pantothenate + AMP + diphosphate + H(+). Its pathway is cofactor biosynthesis; (R)-pantothenate biosynthesis; (R)-pantothenate from (R)-pantoate and beta-alanine: step 1/1. Functionally, catalyzes the condensation of pantoate with beta-alanine in an ATP-dependent reaction via a pantoyl-adenylate intermediate. The protein is Pantothenate synthetase of Salmonella choleraesuis (strain SC-B67).